The chain runs to 274 residues: Thymidylate synthase (274 aa).

Residue Arg-21 coordinates dUMP. Residue His-51 participates in (6R)-5,10-methylene-5,6,7,8-tetrahydrofolate binding. DUMP is bound at residue 123 to 124; it reads RR. The active-site Nucleophile is the Cys-156. DUMP is bound by residues 176 to 179, Asn-187, and 217 to 219; these read RSAD and HIY. Position 179 (Asp-179) interacts with (6R)-5,10-methylene-5,6,7,8-tetrahydrofolate. Position 273 (Ser-273) interacts with (6R)-5,10-methylene-5,6,7,8-tetrahydrofolate.

It belongs to the thymidylate synthase family. Bacterial-type ThyA subfamily. Homodimer.

The protein localises to the cytoplasm. The enzyme catalyses dUMP + (6R)-5,10-methylene-5,6,7,8-tetrahydrofolate = 7,8-dihydrofolate + dTMP. It functions in the pathway pyrimidine metabolism; dTTP biosynthesis. Its function is as follows. Catalyzes the reductive methylation of 2'-deoxyuridine-5'-monophosphate (dUMP) to 2'-deoxythymidine-5'-monophosphate (dTMP) while utilizing 5,10-methylenetetrahydrofolate (mTHF) as the methyl donor and reductant in the reaction, yielding dihydrofolate (DHF) as a by-product. This enzymatic reaction provides an intracellular de novo source of dTMP, an essential precursor for DNA biosynthesis. This is Thymidylate synthase from Francisella tularensis subsp. novicida (strain U112).